The following is a 191-amino-acid chain: dCTP deaminase, dUMP-forming (191 aa).

DCTP-binding positions include 101–106 (KSSLGR), D119, 127–129 (TLE), Q148, Y162, and Q174. Residue E129 is the Proton donor/acceptor of the active site.

The protein belongs to the dCTP deaminase family. Homotrimer.

The catalysed reaction is dCTP + 2 H2O = dUMP + NH4(+) + diphosphate. It functions in the pathway pyrimidine metabolism; dUMP biosynthesis; dUMP from dCTP: step 1/1. Its function is as follows. Bifunctional enzyme that catalyzes both the deamination of dCTP to dUTP and the hydrolysis of dUTP to dUMP without releasing the toxic dUTP intermediate. The polypeptide is dCTP deaminase, dUMP-forming (Streptomyces coelicolor (strain ATCC BAA-471 / A3(2) / M145)).